The following is an 856-amino-acid chain: DNA endonuclease RBBP8 (856 aa).

The interval 25–48 (ELWSKLKECHDKDLQELLMKIGKL) is essential for binding to the MRN complex and for RPA focus formation on DNA damage. 2 coiled-coil regions span residues 38 to 87 (LQEL…EDRL) and 120 to 141 (ITEL…SEQL). Disordered regions lie at residues 143-174 (DMQK…DSPL) and 423-456 (DSEQ…DKEN). Over residues 156-168 (ENPADTGDGEDGV) the composition is skewed to acidic residues. The interval 493–515 (SSSRTKLTISLVPEKPDTKTILH) is damage-recruitment motif. The disordered stretch occupies residues 695-732 (SPSQSISCKERSDIPSIENKKITSEKEHESKGEPYQKQ). The span at 702–730 (CKERSDIPSIENKKITSEKEHESKGEPYQ) shows a compositional bias: basic and acidic residues. Threonine 806 carries the post-translational modification Phosphothreonine. At threonine 818 the chain carries Phosphothreonine; by ATR.

Belongs to the COM1/SAE2/CtIP family. Homotetramer; formed by antiparallel association of helical extensions protruding from the N-termini of two parallel coiled-coil dimers. Interacts with the MRN complex; the interaction links DNA sensing to resection. Interacts with samhd1. Phosphorylation at Thr-818 by atr promotes recruitment to double-strand breaks (DSBs).

Its subcellular location is the nucleus. It localises to the chromosome. In terms of biological role, endonuclease that cooperates with the MRE11-RAD50-NBN (MRN) complex in DNA-end resection, the first step of double-strand break (DSB) repair through the homologous recombination (HR) pathway. Functions downstream of the MRN complex and ATM, promotes ATR activation and its recruitment to DSBs in the S/G2 phase facilitating the generation of ssDNA. Specifically promotes the endonuclease activity of the MRN complex to clear DNA ends containing protein adducts: recruited to DSBs by nbn following phosphorylation, and promotes the endonuclease of mre11 to clear protein-DNA adducts and generate clean double-strand break ends. The MRN complex and rbbp8/CtIP are also required for chromosome alignment during metaphase. The polypeptide is DNA endonuclease RBBP8 (rbbp8) (Xenopus laevis (African clawed frog)).